A 205-amino-acid polypeptide reads, in one-letter code: Thymidylate kinase (205 aa).

10–17 contributes to the ATP binding site; it reads GIDGAGKT.

Belongs to the thymidylate kinase family.

The catalysed reaction is dTMP + ATP = dTDP + ADP. Phosphorylation of dTMP to form dTDP in both de novo and salvage pathways of dTTP synthesis. The sequence is that of Thymidylate kinase from Nitrosospira multiformis (strain ATCC 25196 / NCIMB 11849 / C 71).